Here is a 383-residue protein sequence, read N- to C-terminus: Succinyl-diaminopimelate desuccinylase (383 aa).

Zn(2+) is bound at residue His73. Residue Asp75 is part of the active site. Asp107 is a Zn(2+) binding site. Glu141 acts as the Proton acceptor in catalysis. 3 residues coordinate Zn(2+): Glu142, Glu170, and His356.

The protein belongs to the peptidase M20A family. DapE subfamily. As to quaternary structure, homodimer. Zn(2+) serves as cofactor. The cofactor is Co(2+).

The catalysed reaction is N-succinyl-(2S,6S)-2,6-diaminopimelate + H2O = (2S,6S)-2,6-diaminopimelate + succinate. It functions in the pathway amino-acid biosynthesis; L-lysine biosynthesis via DAP pathway; LL-2,6-diaminopimelate from (S)-tetrahydrodipicolinate (succinylase route): step 3/3. Catalyzes the hydrolysis of N-succinyl-L,L-diaminopimelic acid (SDAP), forming succinate and LL-2,6-diaminopimelate (DAP), an intermediate involved in the bacterial biosynthesis of lysine and meso-diaminopimelic acid, an essential component of bacterial cell walls. This chain is Succinyl-diaminopimelate desuccinylase, found in Pseudomonas putida (strain ATCC 700007 / DSM 6899 / JCM 31910 / BCRC 17059 / LMG 24140 / F1).